A 668-amino-acid chain; its full sequence is MSQDSATTTPPPPLTSDVSMPSGEEDEPKHVTSEEEAPVTSETNLKLPLMPELEESNHTAEVVSEKVTPETMTLESEGLNHAAEDSEQTHEVTPETETAKLEVLNHTAEDSEQTHEVTPEKETVKSEFLNHVAEDSEQTHEVTPETETVKSEVLNHAAEDSEQPRGVTPTPETETSEADTSLLVTSETEEPNHAAEDYSETEPSQKLMLEQRRKYMEVEDWTEPELPDEAVLEAAASVPEPKQPEPQTPPPPPSTTTSTVASRSLAEMMNREEAEVEEKQKIQIPRSLGSFKEETNKISDLSETELNALQELRHLLQVSQDSSKTSIWGVPLLKDDRTDVVLLKFLRARDFKPQEAYSMLNKTLQWRIDFNIEELLDENLGDDLDKVVFMQGQDKENHPVCYNVYGEFQNKDLYQKTFSDEEKRERFLRWRIQFLEKSIRNLDFVAGGVSTICQVNDLKNSPGPGKTELRLATKQALHLLQDNYPEFVSKQIFINVPWWYLAFYRIISPFMSQRSKSKLVFAGPSRSAETLLKYISPEHVPVQYGGLSVDNCECNSDFTHDDIATEITVKPTTKQTVEIIVYEKCTIVWEIRVVGWEVSYGAEFVPENKEGYTVIIQKPRKMTAKNELVVSHSFKVGEVGRILLTVDNPTSTKKMLIYRFKVKPLACE.

Residues 1 to 263 are disordered; the sequence is MSQDSATTTP…STTTSTVASR (263 aa). Composition is skewed to basic and acidic residues over residues 55-68, 82-100, 107-125, and 132-150; these read ESNHTAEVVSEKVT, AAEDSEQTHEVTPETETAK, TAEDSEQTHEVTPEKETVK, and VAEDSEQTHEVTPETETVK. Polar residues predominate over residues 170–186; it reads TPETETSEADTSLLVTS. Residues 218-231 are compositionally biased toward acidic residues; it reads VEDWTEPELPDEAV. Over residues 244–254 the composition is skewed to pro residues; sequence PEPQTPPPPPS. Phosphoserine is present on Ser290. The CRAL-TRIO domain occupies 377-552; the sequence is DENLGDDLDK…QYGGLSVDNC (176 aa). A GOLD domain is found at 556 to 662; that stretch reads SDFTHDDIAT…KKMLIYRFKV (107 aa).

It belongs to the patellin family.

It is found in the membrane. The protein localises to the cytoplasm. Carrier protein that may be involved in membrane-trafficking events associated with cell plate formation during cytokinesis. Binds to some hydrophobic molecules such as phosphoinositides and promotes their transfer between the different cellular sites. The protein is Patellin-5 (PATL5) of Arabidopsis thaliana (Mouse-ear cress).